The chain runs to 29 residues: Cyclotide mden-C (29 aa).

The cyclopeptide (Gly-Asn) cross-link spans 1–29 (GKPICGETCFKGKCYTPGCTCSYPVCKKN). 3 cysteine pairs are disulfide-bonded: Cys5–Cys19, Cys9–Cys21, and Cys14–Cys26.

This sequence belongs to the cyclotide family. Post-translationally, this is a cyclic peptide.

Its function is as follows. Probably participates in a plant defense mechanism. This is Cyclotide mden-C from Melicytus dentatus (Tree violet).